Here is a 317-residue protein sequence, read N- to C-terminus: tRNA dimethylallyltransferase (317 aa).

19–26 (GPTASGKS) provides a ligand contact to ATP. Position 21-26 (21-26 (TASGKS)) interacts with substrate. The tract at residues 44–47 (DSMQ) is interaction with substrate tRNA.

Belongs to the IPP transferase family. Monomer. It depends on Mg(2+) as a cofactor.

The enzyme catalyses adenosine(37) in tRNA + dimethylallyl diphosphate = N(6)-dimethylallyladenosine(37) in tRNA + diphosphate. Functionally, catalyzes the transfer of a dimethylallyl group onto the adenine at position 37 in tRNAs that read codons beginning with uridine, leading to the formation of N6-(dimethylallyl)adenosine (i(6)A). The protein is tRNA dimethylallyltransferase of Methylorubrum populi (strain ATCC BAA-705 / NCIMB 13946 / BJ001) (Methylobacterium populi).